The primary structure comprises 318 residues: DNA polymerase IV (318 aa).

The 181-residue stretch at 6 to 186 (IIHIDMDAFY…LPLGKIPGVG (181 aa)) folds into the UmuC domain. Mg(2+)-binding residues include Asp10 and Asp104. Glu105 is a catalytic residue.

This sequence belongs to the DNA polymerase type-Y family. Monomer. Mg(2+) serves as cofactor.

It is found in the cytoplasm. It catalyses the reaction DNA(n) + a 2'-deoxyribonucleoside 5'-triphosphate = DNA(n+1) + diphosphate. Its function is as follows. Poorly processive, error-prone DNA polymerase involved in untargeted mutagenesis. Copies undamaged DNA at stalled replication forks, which arise in vivo from mismatched or misaligned primer ends. These misaligned primers can be extended by PolIV. Exhibits no 3'-5' exonuclease (proofreading) activity. May be involved in translesional synthesis, in conjunction with the beta clamp from PolIII. The polypeptide is DNA polymerase IV (Neisseria meningitidis serogroup B (strain ATCC BAA-335 / MC58)).